The primary structure comprises 217 residues: Probable transaldolase (217 aa).

The active-site Schiff-base intermediate with substrate is the Lys-83.

It belongs to the transaldolase family. Type 3B subfamily.

It localises to the cytoplasm. The enzyme catalyses D-sedoheptulose 7-phosphate + D-glyceraldehyde 3-phosphate = D-erythrose 4-phosphate + beta-D-fructose 6-phosphate. Its pathway is carbohydrate degradation; pentose phosphate pathway; D-glyceraldehyde 3-phosphate and beta-D-fructose 6-phosphate from D-ribose 5-phosphate and D-xylulose 5-phosphate (non-oxidative stage): step 2/3. In terms of biological role, transaldolase is important for the balance of metabolites in the pentose-phosphate pathway. The sequence is that of Probable transaldolase from Bartonella tribocorum (strain CIP 105476 / IBS 506).